We begin with the raw amino-acid sequence, 313 residues long: GMP synthase [glutamine-hydrolyzing] subunit B (313 aa).

The GMPS ATP-PPase domain occupies 6 to 190 (KVWEKFIEEK…LGLPEKIYNR (185 aa)). Residue 33–39 (SGGVDSS) participates in ATP binding.

In terms of assembly, heterodimer composed of a glutamine amidotransferase subunit (A) and a GMP-binding subunit (B).

The catalysed reaction is XMP + L-glutamine + ATP + H2O = GMP + L-glutamate + AMP + diphosphate + 2 H(+). It functions in the pathway purine metabolism; GMP biosynthesis; GMP from XMP (L-Gln route): step 1/1. Its function is as follows. Catalyzes the synthesis of GMP from XMP. The chain is GMP synthase [glutamine-hydrolyzing] subunit B (guaAB) from Pyrococcus furiosus (strain ATCC 43587 / DSM 3638 / JCM 8422 / Vc1).